Consider the following 74-residue polypeptide: DNA-directed RNA polymerase subunit omega (74 aa).

It belongs to the RNA polymerase subunit omega family. In terms of assembly, the RNAP catalytic core consists of 2 alpha, 1 beta, 1 beta' and 1 omega subunit. When a sigma factor is associated with the core the holoenzyme is formed, which can initiate transcription.

It carries out the reaction RNA(n) + a ribonucleoside 5'-triphosphate = RNA(n+1) + diphosphate. Promotes RNA polymerase assembly. Latches the N- and C-terminal regions of the beta' subunit thereby facilitating its interaction with the beta and alpha subunits. The sequence is that of DNA-directed RNA polymerase subunit omega from Solidesulfovibrio magneticus (strain ATCC 700980 / DSM 13731 / RS-1) (Desulfovibrio magneticus).